Consider the following 452-residue polypeptide: Serine incorporator 2 (452 aa).

A run of 11 helical transmembrane segments spans residues 5–25 (LGAC…PCIL), 41–61 (FFTV…SPGV), 96–116 (AVYR…LLMV), 131–151 (GFWF…FYIP), 158–178 (IWFY…LLLL), 205–225 (LFFF…LLFV), 236–256 (GKVF…VAIL), 266–286 (SGLL…WLAL), 319–339 (WDAP…FISL), 387–407 (FFHL…TNWY), and 426–446 (ICAS…PLLL).

Belongs to the TDE1 family.

Its subcellular location is the cell membrane. It catalyses the reaction a 1,2-diacyl-sn-glycero-3-phospho-L-serine(in) = a 1,2-diacyl-sn-glycero-3-phospho-L-serine(out). It carries out the reaction a 1,2-diacyl-sn-glycero-3-phosphocholine(in) = a 1,2-diacyl-sn-glycero-3-phosphocholine(out). The enzyme catalyses a 1,2-diacyl-sn-glycero-3-phosphoethanolamine(in) = a 1,2-diacyl-sn-glycero-3-phosphoethanolamine(out). Its function is as follows. Non-ATP-dependent, non-specific lipid transporter for phosphatidylserine, phosphatidylcholine, and phosphatidylethanolamine. Functions as a scramblase that flips lipids in both directions across the membrane. In contrast to SERINC3 and SERINC5, has no effect on gammaretrovirus particles infectivity. The protein is Serine incorporator 2 (SERINC2) of Bos taurus (Bovine).